A 191-amino-acid polypeptide reads, in one-letter code: MSSQHFQGRFEVEFKYRLSDVDAFTCALAALNPEVMLEDNQEQDSYFDTPEHSLAAEGKSLVIRTMQPSGIQLWIVKGPEADRCEAVNITDADKAASMLRTLGYRQVLAISKRRSIYFVGPFHVTRDHLEGIGDFAELAIMTDDEALLPDYRQQLQDLATRLGLSSAQLETRSYRTLCEQSLTLNSEKVPS.

The 172-residue stretch at 9-180 folds into the CYTH domain; the sequence is RFEVEFKYRL…TRSYRTLCEQ (172 aa). Catalysis depends on Y46, which acts as the Proton acceptor.

Belongs to the adenylyl cyclase CyaB family.

The protein resides in the cytoplasm. The catalysed reaction is ATP = 3',5'-cyclic AMP + diphosphate. Inhibited by GTP. Functionally, in vitro, CyaB catalyzes the biosynthesis of cyclic AMP (cAMP) from ATP. It seems that under the physiological conditions CyaB has no function in cAMP processes. In vitro, it is also able to hydrolyze substrates such as thiamine triphosphate (ThTP) and inorganic triphosphate (PPPi) at a low rate. It has a slight preference for ThTP over ATP and PPPi in the presence of manganese ions. This PPPase activity is probably not of physiological importance. This is Adenylate cyclase CyaB (cyaB) from Aeromonas hydrophila.